The primary structure comprises 196 residues: HTH-type transcriptional regulator EcpR (196 aa).

In terms of domain architecture, HTH luxR-type spans 138–196; sequence KDIKKDKITDREMEIIRMTAQGMLPKSIARIENCSVKTVYTHRRNAEAKLYSKLYKLVQ. The H-T-H motif DNA-binding region spans 162 to 181; that stretch reads PKSIARIENCSVKTVYTHRR.

It belongs to the EcpR/MatA family.

It localises to the cytoplasm. Its function is as follows. Part of the ecpRABCDE operon, which encodes the E.coli common pilus (ECP). ECP is found in both commensal and pathogenic strains and plays a dual role in early-stage biofilm development and host cell recognition. Positively regulates the expression of the ecp operon by binding to two TTCCT boxes. This Escherichia coli O157:H7 protein is HTH-type transcriptional regulator EcpR (ecpR).